Consider the following 493-residue polypeptide: Transcript termination protein A18 (493 aa).

Positions 100–256 constitute a Helicase ATP-binding domain; that stretch reads MIESKRPLYI…NSIINIAKLS (157 aa). Residue 113–120 participates in ATP binding; sequence LACGFGKT. A DESH box motif is present at residues 206 to 209; it reads DESH.

Belongs to the helicase family. Poxviruses subfamily. Interacts with G2. Might be part of a transcription complex composed at least of G2, A18, and H5.

It localises to the virion. Functionally, DNA helicase which seems to act as a postreplicative transcription termination factor. Involved in ATP-dependent release of nascent RNA. Forms a stable complex with single-stranded DNA, and to a lesser extent RNA. In Vaccinia virus (strain Tian Tan) (VACV), this protein is Transcript termination protein A18.